A 305-amino-acid chain; its full sequence is Protoheme IX farnesyltransferase (305 aa).

Helical transmembrane passes span 26–46 (VMSLVVFTAFVGLWIAPQPVN), 47–67 (PFVAFCAVLFIALGGGASGAL), 98–118 (LAVGIALSGLSVMMLGLAANW), 119–139 (FAAGFLAFTIFFYAVVYTIWL), 147–167 (IVIGGAAGAFPPMIGWACATG), 174–194 (LLMFALIFFWTPPHFWALALF), 220–240 (IFAYTLVLAPFALWLGFTSVG), 243–263 (LYLAVSVVLNALFIAGGWQIL), and 284–304 (LSLYYTFLHFLALLVQHWVGG).

Belongs to the UbiA prenyltransferase family. Protoheme IX farnesyltransferase subfamily. In terms of assembly, interacts with CtaA.

It localises to the cell inner membrane. The enzyme catalyses heme b + (2E,6E)-farnesyl diphosphate + H2O = Fe(II)-heme o + diphosphate. The protein operates within porphyrin-containing compound metabolism; heme O biosynthesis; heme O from protoheme: step 1/1. Its function is as follows. Converts heme B (protoheme IX) to heme O by substitution of the vinyl group on carbon 2 of heme B porphyrin ring with a hydroxyethyl farnesyl side group. This is Protoheme IX farnesyltransferase from Paracoccus denitrificans (strain Pd 1222).